We begin with the raw amino-acid sequence, 266 residues long: Glucosamine-6-phosphate deaminase (266 aa).

Aspartate 72 serves as the catalytic Proton acceptor; for enolization step. Residue aspartate 141 is the For ring-opening step of the active site. Histidine 143 functions as the Proton acceptor; for ring-opening step in the catalytic mechanism. Residue glutamate 148 is the For ring-opening step of the active site.

The protein belongs to the glucosamine/galactosamine-6-phosphate isomerase family. NagB subfamily. Homohexamer.

It carries out the reaction alpha-D-glucosamine 6-phosphate + H2O = beta-D-fructose 6-phosphate + NH4(+). It participates in amino-sugar metabolism; N-acetylneuraminate degradation; D-fructose 6-phosphate from N-acetylneuraminate: step 5/5. Its activity is regulated as follows. Allosterically activated by N-acetylglucosamine 6-phosphate (GlcNAc6P). Catalyzes the reversible isomerization-deamination of glucosamine 6-phosphate (GlcN6P) to form fructose 6-phosphate (Fru6P) and ammonium ion. The chain is Glucosamine-6-phosphate deaminase from Klebsiella pneumoniae (strain 342).